A 103-amino-acid polypeptide reads, in one-letter code: Small ribosomal subunit protein uS10c (103 aa).

Belongs to the universal ribosomal protein uS10 family. Part of the 30S ribosomal subunit.

It is found in the plastid. The protein localises to the chloroplast. Its function is as follows. Involved in the binding of tRNA to the ribosomes. The chain is Small ribosomal subunit protein uS10c from Trieres chinensis (Marine centric diatom).